Reading from the N-terminus, the 83-residue chain is MKTLLLTLVVVTIVCLDLGYTMTCCNQQSSQPKTTTTCAGGESSCYKKTWSDHRGSRTERGCGCPHVKPGIKLTCCETDECNN.

An N-terminal signal peptide occupies residues 1 to 21 (MKTLLLTLVVVTIVCLDLGYT). 4 disulfides stabilise this stretch: C24-C45, C38-C62, C64-C75, and C76-C81.

This sequence belongs to the three-finger toxin family. Short-chain subfamily. Type I alpha-neurotoxin sub-subfamily. In terms of tissue distribution, expressed by the venom gland.

The protein resides in the secreted. Its function is as follows. Bird-specific neurotoxin (tested on chicken) that acts as a pseudo-irreversible antagonist at the nicotinic acetylcholine receptor (nAChR) of the skeletal neuromuscular junction. Has no significant effect on the electrically-induced twitches of the rat isolated phrenic nerve-diaphragm preparation. The chain is Alpha-elapitoxin-Ppr1 from Pseudechis porphyriacus (Red-bellied black snake).